The chain runs to 459 residues: UDP-N-acetylglucosamine 1-carboxyvinyltransferase (459 aa).

Position 40–41 (40–41) interacts with phosphoenolpyruvate; the sequence is KN. Residue R111 coordinates UDP-N-acetyl-alpha-D-glucosamine. The active-site Proton donor is C135. Residue C135 is modified to 2-(S-cysteinyl)pyruvic acid O-phosphothioketal. Residues 140–144, D324, and V346 each bind UDP-N-acetyl-alpha-D-glucosamine; that span reads RPVDL. The interval 437–459 is disordered; that stretch reads PSAPPSEVSSAVAAGPDAAAAPV. Residues 441–459 are compositionally biased toward low complexity; that stretch reads PSEVSSAVAAGPDAAAAPV.

This sequence belongs to the EPSP synthase family. MurA subfamily.

It is found in the cytoplasm. The catalysed reaction is phosphoenolpyruvate + UDP-N-acetyl-alpha-D-glucosamine = UDP-N-acetyl-3-O-(1-carboxyvinyl)-alpha-D-glucosamine + phosphate. It participates in cell wall biogenesis; peptidoglycan biosynthesis. Its function is as follows. Cell wall formation. Adds enolpyruvyl to UDP-N-acetylglucosamine. This Gloeobacter violaceus (strain ATCC 29082 / PCC 7421) protein is UDP-N-acetylglucosamine 1-carboxyvinyltransferase.